The chain runs to 414 residues: Histidine--tRNA ligase (414 aa).

It belongs to the class-II aminoacyl-tRNA synthetase family. In terms of assembly, homodimer.

The protein resides in the cytoplasm. It carries out the reaction tRNA(His) + L-histidine + ATP = L-histidyl-tRNA(His) + AMP + diphosphate + H(+). This Rickettsia africae (strain ESF-5) protein is Histidine--tRNA ligase.